The primary structure comprises 547 residues: CTP synthase (547 aa).

Residues 1 to 265 (MARFIFITGG…DQAVLDAFQI (265 aa)) form an amidoligase domain region. Ser-13 provides a ligand contact to CTP. A UTP-binding site is contributed by Ser-13. ATP-binding positions include 14-19 (SLGKGL) and Asp-71. Positions 71 and 139 each coordinate Mg(2+). CTP-binding positions include 146–148 (DIE), 186–191 (KTKPTQ), and Lys-222. UTP is bound by residues 186 to 191 (KTKPTQ) and Lys-222. In terms of domain architecture, Glutamine amidotransferase type-1 spans 291 to 546 (KIAIVGKYVQ…VRAAKESSRL (256 aa)). Gly-353 is an L-glutamine binding site. Catalysis depends on Cys-380, which acts as the Nucleophile; for glutamine hydrolysis. L-glutamine contacts are provided by residues 381–384 (LGMQ), Glu-404, and Arg-474. Active-site residues include His-519 and Glu-521.

It belongs to the CTP synthase family. As to quaternary structure, homotetramer.

It carries out the reaction UTP + L-glutamine + ATP + H2O = CTP + L-glutamate + ADP + phosphate + 2 H(+). It catalyses the reaction L-glutamine + H2O = L-glutamate + NH4(+). The catalysed reaction is UTP + NH4(+) + ATP = CTP + ADP + phosphate + 2 H(+). It functions in the pathway pyrimidine metabolism; CTP biosynthesis via de novo pathway; CTP from UDP: step 2/2. With respect to regulation, allosterically activated by GTP, when glutamine is the substrate; GTP has no effect on the reaction when ammonia is the substrate. The allosteric effector GTP functions by stabilizing the protein conformation that binds the tetrahedral intermediate(s) formed during glutamine hydrolysis. Inhibited by the product CTP, via allosteric rather than competitive inhibition. Functionally, catalyzes the ATP-dependent amination of UTP to CTP with either L-glutamine or ammonia as the source of nitrogen. Regulates intracellular CTP levels through interactions with the four ribonucleotide triphosphates. The protein is CTP synthase of Ruegeria pomeroyi (strain ATCC 700808 / DSM 15171 / DSS-3) (Silicibacter pomeroyi).